The sequence spans 298 residues: Glycine--tRNA ligase alpha subunit (298 aa).

Belongs to the class-II aminoacyl-tRNA synthetase family. Tetramer of two alpha and two beta subunits.

Its subcellular location is the cytoplasm. The enzyme catalyses tRNA(Gly) + glycine + ATP = glycyl-tRNA(Gly) + AMP + diphosphate. The sequence is that of Glycine--tRNA ligase alpha subunit from Helicobacter pylori (strain Shi470).